The primary structure comprises 310 residues: Transcriptional regulator NRG1 (310 aa).

Positions 85-131 (YYMGPPAQHRLPTPPPYPMSSPTTATAATPLSQQSPHLQPQQTLQQP) are disordered. Residues 104-131 (SSPTTATAATPLSQQSPHLQPQQTLQQP) are compositionally biased toward low complexity. 2 C2H2-type zinc fingers span residues 228–250 (HVCKVCSRSFTTSGHLARHNRIH) and 256–280 (HQCPWPTCEARFARQDNCNQHYKTH).

The protein resides in the nucleus. In terms of biological role, transcriptional repressor that binds NRG1 response elements (NRE) of target promoters. Involved in regulation of chlamydospore formation, hyphal growth, virulence, and stress response. Plays a key role in regulating true hyphal growth, but does not regulate pseudohyphal growth in the same fashion. Directs transcriptional repression of a subset of filament-specific genes such as HWP1, HYR1, ALS8, HWP1, or ECE1; via the TUP1 pathway. Functions with UME6 in a negative feedback loop to control the level and duration of filament-specific gene expression in response to inducing conditions. Plays a key role in biofilm formation and dispersion. Also plays the role of a negative regulator of virulence in mice models. Required for the expression of the cell wall genes RBR1. The polypeptide is Transcriptional regulator NRG1 (NRG1) (Candida albicans (strain SC5314 / ATCC MYA-2876) (Yeast)).